Reading from the N-terminus, the 291-residue chain is MVREQYTTVTEGTHIERPENQHIYKIGIYGWRKRCLYLFVLLLLAILVVNLALTIWILKVMWFSPIGMGHLHVTADGLRLEGESEFLFPLYAKEIRSRVDSSLLLQSTQNVTVSARNSEGEVTGRVKVGAQMVEVQSQHFQINSEDGKPLFSAEEQDVVVGTGRLRVTGPEGALFEHSVETPLVRADPFQDLRLESPTRSLSMDAPRGVHVKANAGKLEALSQMDIILQSSEGVLVLDAETVGLTKLKQGTQGPAGSSNGFYEICACPDGKLYLSMAGEVTTCEEHSHVCL.

At 1 to 37 (MVREQYTTVTEGTHIERPENQHIYKIGIYGWRKRCLY) the chain is on the cytoplasmic side. The helical; Signal-anchor for type II membrane protein transmembrane segment at 38-58 (LFVLLLLAILVVNLALTIWIL) threads the bilayer. Residues 59 to 291 (KVMWFSPIGM…TCEEHSHVCL (233 aa)) are Extracellular-facing. An N-linked (GlcNAc...) asparagine glycan is attached at N110. Disulfide bonds link C265–C290 and C267–C283.

It belongs to the sarcoglycan beta/delta/gamma/zeta family. In terms of assembly, interacts with the syntrophin SNTA1 and FLNC. Cross-link to form 2 major subcomplexes: one consisting of SGCB, SGCD and SGCG and the other consisting of SGCB and SGCD. The association between SGCB and SGCG is particularly strong while SGCA is loosely associated with the other sarcoglycans. In terms of tissue distribution, most strongly expressed in skeletal and heart muscle. Also detected in proliferating myoblasts.

The protein resides in the cell membrane. The protein localises to the sarcolemma. Its subcellular location is the cytoplasm. It localises to the cytoskeleton. In terms of biological role, component of the sarcoglycan complex, a subcomplex of the dystrophin-glycoprotein complex which forms a link between the F-actin cytoskeleton and the extracellular matrix. This is Gamma-sarcoglycan (Sgcg) from Mus musculus (Mouse).